Reading from the N-terminus, the 160-residue chain is Small ribosomal subunit protein uS9 (160 aa).

The span at 1–18 (MTDTSNSLQDLGTLTGAP) shows a compositional bias: polar residues. The disordered stretch occupies residues 1-37 (MTDTSNSLQDLGTLTGAPSAQPVKSVEPKIDAQGRAY).

The protein belongs to the universal ribosomal protein uS9 family.

This chain is Small ribosomal subunit protein uS9, found in Hyphomonas neptunium (strain ATCC 15444).